Here is a 419-residue protein sequence, read N- to C-terminus: UDP-N-acetylglucosamine 1-carboxyvinyltransferase (419 aa).

Position 22-23 (22-23) interacts with phosphoenolpyruvate; it reads KN. Residue Arg91 participates in UDP-N-acetyl-alpha-D-glucosamine binding. Catalysis depends on Cys115, which acts as the Proton donor. At Cys115 the chain carries 2-(S-cysteinyl)pyruvic acid O-phosphothioketal. Residues 120–124, 160–163, Asp305, and Ile327 each bind UDP-N-acetyl-alpha-D-glucosamine; these read RPVDL and KVSV.

It belongs to the EPSP synthase family. MurA subfamily.

Its subcellular location is the cytoplasm. The enzyme catalyses phosphoenolpyruvate + UDP-N-acetyl-alpha-D-glucosamine = UDP-N-acetyl-3-O-(1-carboxyvinyl)-alpha-D-glucosamine + phosphate. Its pathway is cell wall biogenesis; peptidoglycan biosynthesis. In terms of biological role, cell wall formation. Adds enolpyruvyl to UDP-N-acetylglucosamine. This Klebsiella pneumoniae subsp. pneumoniae (strain ATCC 700721 / MGH 78578) protein is UDP-N-acetylglucosamine 1-carboxyvinyltransferase.